A 448-amino-acid polypeptide reads, in one-letter code: Phosphoglucosamine mutase (448 aa).

Ser-101 functions as the Phosphoserine intermediate in the catalytic mechanism. Residues Ser-101, Asp-242, Asp-244, and Asp-246 each contribute to the Mg(2+) site. The residue at position 101 (Ser-101) is a Phosphoserine.

The protein belongs to the phosphohexose mutase family. Requires Mg(2+) as cofactor. Post-translationally, activated by phosphorylation.

It catalyses the reaction alpha-D-glucosamine 1-phosphate = D-glucosamine 6-phosphate. Functionally, catalyzes the conversion of glucosamine-6-phosphate to glucosamine-1-phosphate. The sequence is that of Phosphoglucosamine mutase from Nitrobacter winogradskyi (strain ATCC 25391 / DSM 10237 / CIP 104748 / NCIMB 11846 / Nb-255).